The chain runs to 424 residues: Tyrosine--tRNA ligase (424 aa).

Position 37 (Tyr-37) interacts with L-tyrosine. The 'HIGH' region signature appears at 42–51 (PTADSLHLGH). Residues Tyr-174 and Gln-178 each coordinate L-tyrosine. Residues 234–238 (KFGKT) carry the 'KMSKS' region motif. Lys-237 serves as a coordination point for ATP. Residues 357 to 414 (TGLIDALVASGLAKSKSEARTFIQSGSVAINGNKAEALDHAIGGDELLYGRFTILRRG) enclose the S4 RNA-binding domain.

The protein belongs to the class-I aminoacyl-tRNA synthetase family. TyrS type 1 subfamily. Homodimer.

Its subcellular location is the cytoplasm. It carries out the reaction tRNA(Tyr) + L-tyrosine + ATP = L-tyrosyl-tRNA(Tyr) + AMP + diphosphate + H(+). Its function is as follows. Catalyzes the attachment of tyrosine to tRNA(Tyr) in a two-step reaction: tyrosine is first activated by ATP to form Tyr-AMP and then transferred to the acceptor end of tRNA(Tyr). The polypeptide is Tyrosine--tRNA ligase (Dechloromonas aromatica (strain RCB)).